Here is a 642-residue protein sequence, read N- to C-terminus: Dihydrolipoyllysine-residue acetyltransferase component of pyruvate dehydrogenase complex, mitochondrial (642 aa).

A mitochondrion-targeting transit peptide spans 1–85 (MWRVCARRAR…LLGSPSRRSY (85 aa)). Residues 80-99 (PSRRSYSLPPHQKVPLPSLS) form a disordered region. Lipoyl-binding domains lie at 90 to 166 (HQKV…CITV) and 217 to 293 (HMQI…CIIV). A Phosphoserine modification is found at Ser-99. Lys-131 and Lys-258 each carry N6-lipoyllysine. The tract at residues 313-346 (LKPQAAPPAPPPVAAVPPTPQPVAPTPSAAPAGP) is disordered. The segment covering 317–337 (AAPPAPPPVAAVPPTPQPVAP) has biased composition (pro residues). Residues 351–388 (FVSPLAKKLAAEKGIDLTQVKGTGPEGRIIKKDIDSFV) enclose the Peripheral subunit-binding (PSBD) domain. Position 456 (Arg-456) interacts with CoA. Lys-461 carries the post-translational modification N6-acetyllysine. At Lys-468 the chain carries N6-succinyllysine. CoA is bound at residue Ser-470. Lys-542 bears the N6-succinyllysine mark. CoA is bound by residues Ser-561, Asn-562, and Gly-586. Active-site residues include His-615 and Asp-619.

This sequence belongs to the 2-oxoacid dehydrogenase family. Part of the pyruvate dehydrogenase complex (PDHc) that is a multi-enzyme complex composed of multiple copies of three enzymes, pyruvate dehydrogenase (subunits PDH1A and PDHB, E1 component), dihydrolipoamide acetyltransferase (DLAT, E2 component), and dihydrolipoamide dehydrogenase (DLD, E3 component) to which is added an additional protein the E3-binding protein (PDHX, E3BP). In terms of structural architecture, the E2 and E3BP components assemble into a 60meric central core with icosahedral symmetry. The central core is decorated with E1 and E3 proteins. Currently, two alternative models for the E2:E3BP stoichiometry are considered as being either 48:12 (E2(48)-E3BP(12)) or 40:20 (E2(40)-E3BP(20)). Interacts with PDK2 and PDK3. Interacts with SIRT4. Interacts with PDHB. It depends on (R)-lipoate as a cofactor. Delipoylated at Lys-131 and Lys-258 by SIRT4, delipoylation decreases the PHD complex activity.

Its subcellular location is the mitochondrion matrix. It catalyses the reaction N(6)-[(R)-dihydrolipoyl]-L-lysyl-[protein] + acetyl-CoA = N(6)-[(R)-S(8)-acetyldihydrolipoyl]-L-lysyl-[protein] + CoA. Its function is as follows. As part of the pyruvate dehydrogenase complex, catalyzes the transfers of an acetyl group to a lipoic acid moiety. The pyruvate dehydrogenase complex, catalyzes the overall conversion of pyruvate to acetyl-CoA and CO(2), and thereby links cytoplasmic glycolysis and the mitochondrial tricarboxylic acid (TCA) cycle. This Mus musculus (Mouse) protein is Dihydrolipoyllysine-residue acetyltransferase component of pyruvate dehydrogenase complex, mitochondrial.